A 430-amino-acid polypeptide reads, in one-letter code: Probable WRKY transcription factor 14 (430 aa).

Residues 211–277 (SGEVVPSDLW…YTSEHNHPWP (67 aa)) constitute a DNA-binding region (WRKY). The disordered stretch occupies residues 283–366 (LAGSTRSSTS…APYRPELHDH (84 aa)). A compositionally biased stretch (low complexity) spans 286 to 306 (STRSSTSSSSNPNPSKPSTAN). Positions 307 to 319 (VNSSSIGSQNTIY) are enriched in polar residues. Residues 340-354 (GDDMELENVDDDDDN) show a composition bias toward acidic residues.

It belongs to the WRKY group II-e family.

The protein localises to the nucleus. Functionally, transcription factor. Interacts specifically with the W box (5'-(T)TGAC[CT]-3'), a frequently occurring elicitor-responsive cis-acting element. The protein is Probable WRKY transcription factor 14 (WRKY14) of Arabidopsis thaliana (Mouse-ear cress).